Reading from the N-terminus, the 901-residue chain is Pantothenate kinase 2 (901 aa).

The segment covering 1–10 has biased composition (acidic residues); that stretch reads MAGQEDEYDP. The tract at residues 1–50 is disordered; it reads MAGQEDEYDPILDNKREAEAKSQVSVAADKNMAPSTSGTPIHRSGSRPQL. A pantothenate kinase region spans residues 1 to 466; the sequence is MAGQEDEYDP…LGDLDEKISW (466 aa). The interval 467-901 is 4'-phosphopantetheine phosphatase; it reads MEKFVRRGTE…CVCRYEPPSL (435 aa). Positions 731, 732, and 767 each coordinate Mn(2+). A Subfamily II EGMGR motif motif is present at residues 851-855; that stretch reads EGMGR.

The protein in the N-terminal section; belongs to the type II pantothenate kinase family. This sequence in the C-terminal section; belongs to the damage-control phosphatase family. Phosphopantetheine phosphatase II subfamily. Requires Mn(2+) as cofactor. It depends on Ni(2+) as a cofactor. As to expression, highly expressed in leaves and developing seeds. Expressed in roots, stems and flowers.

The enzyme catalyses (R)-pantothenate + ATP = (R)-4'-phosphopantothenate + ADP + H(+). The catalysed reaction is (R)-4'-phosphopantothenate + H2O = (R)-pantothenate + phosphate. It carries out the reaction (R)-4'-phosphopantetheine + H2O = (R)-pantetheine + phosphate. It catalyses the reaction (R)-4'-phosphopantetheine sulfonate + H2O = (R)-pantetheine sulfonate + phosphate. It participates in cofactor biosynthesis; coenzyme A biosynthesis; CoA from (R)-pantothenate: step 1/5. With respect to regulation, activity is strongly promoted by Co(2+), Ni(2+) and Mn(2+). Activity is inhibited by EDTA. Its function is as follows. Catalyzes the phosphorylation of pantothenate the first step in CoA biosynthesis. May play a role in the physiological regulation of the intracellular CoA concentration. Functionally redudant with PANK1. The phosphatase activity shows preference for normal or oxidatively damaged intermediates of 4'-phosphopantetheine, which provides strong indirect evidence that the phosphatase activity pre-empts damage in the CoA pathway. Hydrolyzing excess 4'-phosphopantetheine could constitute a directed overflow mechanism to prevent its oxidation to the S-sulfonate, sulfonate, or other forms. Hydrolyzing 4'-phosphopantetheine sulfonate or S-sulfonate would forestall their conversion to inactive forms of CoA and acyl carrier protein. The protein is Pantothenate kinase 2 (PANK2) of Arabidopsis thaliana (Mouse-ear cress).